The sequence spans 290 residues: Cilia- and flagella-associated protein 298 (290 aa).

It belongs to the CFAP298 family. In terms of assembly, interacts with ZMYND10. In terms of tissue distribution, expressed in the trachea (at protein level).

It localises to the cytoplasm. The protein localises to the cytoskeleton. Its subcellular location is the cilium basal body. Plays a role in motile cilium function, possibly by acting on outer dynein arm assembly. Seems to be important for initiation rather than maintenance of cilium motility. Required for correct positioning of cilia at the apical cell surface, suggesting an additional role in the planar cell polarity (PCP) pathway. May suppress canonical Wnt signaling activity. This is Cilia- and flagella-associated protein 298 from Rattus norvegicus (Rat).